We begin with the raw amino-acid sequence, 254 residues long: Probable phosphomannomutase (254 aa).

The active-site Nucleophile is Asp14. Residues Asp14 and Asp16 each contribute to the Mg(2+) site. Catalysis depends on Asp16, which acts as the Proton donor/acceptor. Residues Arg23, Arg129, Arg140, Arg147, Ser185, and Asp187 each contribute to the alpha-D-mannose 1-phosphate site. Mg(2+)-binding residues include Asp214, Phe226, Asp228, and Thr231.

This sequence belongs to the eukaryotic PMM family. In terms of assembly, homodimer.

It localises to the cytoplasm. It carries out the reaction alpha-D-mannose 1-phosphate = D-mannose 6-phosphate. It participates in nucleotide-sugar biosynthesis; GDP-alpha-D-mannose biosynthesis; alpha-D-mannose 1-phosphate from D-fructose 6-phosphate: step 2/2. Its function is as follows. Involved in the synthesis of the GDP-mannose and dolichol-phosphate-mannose required for a number of critical mannosyl transfer reactions. The polypeptide is Probable phosphomannomutase (Caenorhabditis elegans).